The sequence spans 436 residues: UDP-N-acetylglucosamine 1-carboxyvinyltransferase 1 (436 aa).

22 to 23 lines the phosphoenolpyruvate pocket; sequence KN. Residue R93 coordinates UDP-N-acetyl-alpha-D-glucosamine. C117 serves as the catalytic Proton donor. Position 117 is a 2-(S-cysteinyl)pyruvic acid O-phosphothioketal (C117). UDP-N-acetyl-alpha-D-glucosamine is bound by residues 122–126, D306, and V328; that span reads RPIDQ.

It belongs to the EPSP synthase family. MurA subfamily.

The protein resides in the cytoplasm. It catalyses the reaction phosphoenolpyruvate + UDP-N-acetyl-alpha-D-glucosamine = UDP-N-acetyl-3-O-(1-carboxyvinyl)-alpha-D-glucosamine + phosphate. The protein operates within cell wall biogenesis; peptidoglycan biosynthesis. Functionally, cell wall formation. Adds enolpyruvyl to UDP-N-acetylglucosamine. Essential for cell growth. The protein is UDP-N-acetylglucosamine 1-carboxyvinyltransferase 1 of Bacillus subtilis (strain 168).